Consider the following 740-residue polypeptide: MISFGPAQESSLKMEVQSVSSEVNGHQIMDEPMEEESYTHCDEGAYKEIPITHHVKEGCEKADPSQFELLKVLGQGSFGKVFLVRKLMGPDAGQLYAMKVLKKASLKVRDRVRTKMERDILVEVNHPFIVKLHYAFQTEGKLYLILDFLRGGDVFTRLSKEVMFTEEDVKFYLAELALALDHLHNLGIVYRDLKPENILLDEAGHIKLTDFGLSKESVDQDKKAYSFCGTVEYMAPEVVNRRGHTQSADWWSLGVLMFEMLTGTLPFQGKDRNETMNMILKAKLGMPQFLSLEAQGLLRMLFKRNPSNRLGAGPDGVEEIKRHTFFSTIDWNKLYRRELQPPFKPASGKPDDTFCFDPEFTAKTPKDSPGIPPSANAHQLFKGFSFVAPVSLEESKSAPLVNILPIVQVHGSSAQFSDVYELKEDIGVGSYSICKRCIHRVTAMEFAVKIIDKSKRDPSEEIEILMRYGQHPNIITLKDVYDEGRFVYLVTELMKGGELLDKILRQKFFSEREASAVLYTITKTVDYLHCQGVVHRDLKPSNILYMDDSGNPDSIRICDFGFAKQLRGDNGLLLTPCYTANFVAPEVLMRQGYDAACDIWSLGVLLYTMLAGYTPFANGPNDTPEEILLRIGSGKFSLSGGNWDSVSDSSKDLLSHMLHVDPHHRYTAEQVLKHSWIACRDQNPHFQLTRHEAPHLVKGAMAATYSALNHKTCKPVLEPVAASSLAQRRNMKKLTSTDMS.

Positions Phe67 to Phe326 constitute a Protein kinase 1 domain. Residues Leu73–Val81 and Lys99 each bind ATP. The active-site Proton acceptor is the Asp192. The 70-residue stretch at Ser327 to Lys396 folds into the AGC-kinase C-terminal domain. The region spanning Tyr420–Ile677 is the Protein kinase 2 domain. ATP contacts are provided by residues Ile426–Cys434 and Lys449. The Proton acceptor role is filled by Asp537.

This sequence belongs to the protein kinase superfamily. AGC Ser/Thr protein kinase family. S6 kinase subfamily. In terms of assembly, forms a complex with either ERK1 or ERK2 in quiescent cells. Transiently dissociates following mitogenic stimulation. Mg(2+) serves as cofactor.

The enzyme catalyses L-seryl-[protein] + ATP = O-phospho-L-seryl-[protein] + ADP + H(+). The catalysed reaction is L-threonyl-[protein] + ATP = O-phospho-L-threonyl-[protein] + ADP + H(+). With respect to regulation, activated by multiple phosphorylations on threonine and serine residues. In terms of biological role, serine/threonine kinase that may play a role in mediating the growth-factor and stress induced activation of the transcription factor CREB. In Danio rerio (Zebrafish), this protein is Ribosomal protein S6 kinase alpha-6 (rps6ka6).